The following is a 316-amino-acid chain: Glutamyl endopeptidase (316 aa).

Positions 1–30 (MVSKKSVKRGLITGLIGISIYSLGMHPAQA) are cleaved as a signal peptide. Positions 31-94 (APSPHTPVSS…SPAKAPYSIK (64 aa)) are excised as a propeptide. A disulfide bond links Cys-126 and Cys-142. Residues His-141 and Ser-261 each act as charge relay system in the active site. Cysteines 275 and 279 form a disulfide.

This sequence belongs to the peptidase S1B family.

Its subcellular location is the secreted. It carries out the reaction Preferential cleavage: Glu-|-Xaa, Asp-|-Xaa.. Its function is as follows. Specific for hydrolysis of peptide bonds on the carboxyl side of acidic amino acid residues, with a strong preference for Glu. This is Glutamyl endopeptidase (blaSE) from Bacillus licheniformis (strain ATCC 14580 / DSM 13 / JCM 2505 / CCUG 7422 / NBRC 12200 / NCIMB 9375 / NCTC 10341 / NRRL NRS-1264 / Gibson 46).